The chain runs to 1012 residues: MDLVSFFNPYLENVRTKKKTKSTFLRIFPRGIMHDGAPGLMKTLCDSEPRMFYQDKQYILKNDMTWPSLSQVAEKELRAPLKFHIYDASESLLFTDSIENIPFQYRHFVIPSGNVIKLFGKTECGKKVCINVFGQNSYFYCEYQCKKELNSRICSLLNSSEIKMSCSFSIESVTKYNFYGYNTEPIKNLFKLSFSNFYISNRIGKILLNEGVSVYEAEVEILNRFFIDNNLKSFGWYQINYLSIQEFAKSSNVEIELNCHVSDLFLLKEDSWPLYDCCSFDIECLSQNGNFPDAEQMVTSSLISVIDFDSEGNYQSKHLFTLGTCEQIEGVFIYEFASEFELLYAFFLFLKCKSPEILTGYNIINFDLKYLCTRMEKIYNFEIGGFSKLKRGKFSVIVPYEQHKKFLNSLTKVNMSGILCFDMYNVYSSKISAQNYKLDTIAKLCLNQEKENLSYKEIPKKFIDGSKGRAVVGRYCIQDSLLVVQLFTKINYHYEMAEVASLAYITIRCAVFEGQQKKIFPCILHEAKNLNMILPSMNTNFNKGKENVGYKGATVLEPKIGYYATPTVVFDFQSLYPSIMMAHNLCYSTLVVDENAVIGLHADDILTVHVGPVTHRFVKKTVRESILASLLKKWLDKRKEVKMQMKMCNNPVMEMLLDKKQLALKTTCNSVYGVTGATHSLLPCVAIAASVTCLGREMLCKTVDYVDSAMYSDTFFIEKFGLTRGDFSGTFGIEVIYGDTDSLFVTFKNVCPKALKRIAPSIASHITNTLFKHPIKLEFEKILFPLILICKKRYIGKLDDATLVFKGVELVRKTSCDFVKVVVKDIIDLLFWDVDVQKSAEKLSNMTIQEIYENGVPDGIQKIIKKLCDARDALFLNRVNIKSLVLSSVLSKDISAYKQANLPHLAVVKRLAQRKEELPNIGDRVMYILIAPTETVKKTFHNYELAEDPAYAIENNLKINADKYFEQIMKAVTNAISPIFPKTGIKKEKFLLSILPLKVYVDQSFCDLTDVL.

Belongs to the DNA polymerase type-B family.

It is found in the host nucleus. The enzyme catalyses DNA(n) + a 2'-deoxyribonucleoside 5'-triphosphate = DNA(n+1) + diphosphate. This Homo sapiens (Human) protein is DNA polymerase catalytic subunit (U38).